The chain runs to 473 residues: Ribulose bisphosphate carboxylase large chain (473 aa).

Positions 116 and 166 each coordinate substrate. The active-site Proton acceptor is lysine 168. Lysine 170 contributes to the substrate binding site. Residues lysine 194, aspartate 196, and glutamate 197 each coordinate Mg(2+). At lysine 194 the chain carries N6-carboxylysine. Residue histidine 287 is the Proton acceptor of the active site. Positions 288, 320, and 372 each coordinate substrate.

It belongs to the RuBisCO large chain family. Type I subfamily. As to quaternary structure, heterohexadecamer of 8 large chains and 8 small chains. In R.sphaeroides the complex is approximately 500 kDa. Requires Mg(2+) as cofactor.

The enzyme catalyses 2 (2R)-3-phosphoglycerate + 2 H(+) = D-ribulose 1,5-bisphosphate + CO2 + H2O. It catalyses the reaction D-ribulose 1,5-bisphosphate + O2 = 2-phosphoglycolate + (2R)-3-phosphoglycerate + 2 H(+). Functionally, ruBisCO catalyzes two reactions: the carboxylation of D-ribulose 1,5-bisphosphate, the primary event in carbon dioxide fixation, as well as the oxidative fragmentation of the pentose substrate. Both reactions occur simultaneously and in competition at the same active site. This Thiobacillus denitrificans (strain ATCC 25259 / T1) protein is Ribulose bisphosphate carboxylase large chain.